The following is a 98-amino-acid chain: Aspartyl/glutamyl-tRNA(Asn/Gln) amidotransferase subunit C (98 aa).

It belongs to the GatC family. Heterotrimer of A, B and C subunits.

It carries out the reaction L-glutamyl-tRNA(Gln) + L-glutamine + ATP + H2O = L-glutaminyl-tRNA(Gln) + L-glutamate + ADP + phosphate + H(+). The enzyme catalyses L-aspartyl-tRNA(Asn) + L-glutamine + ATP + H2O = L-asparaginyl-tRNA(Asn) + L-glutamate + ADP + phosphate + 2 H(+). Functionally, allows the formation of correctly charged Asn-tRNA(Asn) or Gln-tRNA(Gln) through the transamidation of misacylated Asp-tRNA(Asn) or Glu-tRNA(Gln) in organisms which lack either or both of asparaginyl-tRNA or glutaminyl-tRNA synthetases. The reaction takes place in the presence of glutamine and ATP through an activated phospho-Asp-tRNA(Asn) or phospho-Glu-tRNA(Gln). The chain is Aspartyl/glutamyl-tRNA(Asn/Gln) amidotransferase subunit C from Paenarthrobacter aurescens (strain TC1).